The sequence spans 814 residues: Outer membrane usher protein SefC (814 aa).

Residues 1 to 30 form the signal peptide; that stretch reads MKKTTITLFVLTSVFHSGNVFSRQYNFDYG. An intrachain disulfide couples C792 to C813.

It belongs to the fimbrial export usher family.

The protein localises to the cell outer membrane. In terms of biological role, involved in the export and assembly of the SefA fimbrial subunit. In Salmonella enteritidis, this protein is Outer membrane usher protein SefC (sefC).